Reading from the N-terminus, the 654-residue chain is Macrolide export ATP-binding/permease protein MacB (654 aa).

The ABC transporter domain occupies 6–244 (LKVEDLTRRF…EQAAKTPSAS (239 aa)). 42 to 49 (GASGSGKS) serves as a coordination point for ATP. The next 4 membrane-spanning stretches (helical) occupy residues 280-300 (FLTMLGIIIGIASVVSVVALG), 529-549 (LLISAIAVISLIVGGIGVMNI), 584-604 (LVCLCGGIAGIGLAFLIGFAF), and 619-639 (SIIWAFICSTLIGIAFGFLPA).

It belongs to the ABC transporter superfamily. Macrolide exporter (TC 3.A.1.122) family. Homodimer. Part of the tripartite efflux system MacAB-TolC, which is composed of an inner membrane transporter, MacB, a periplasmic membrane fusion protein, MacA, and an outer membrane component, TolC. The complex forms a large protein conduit and can translocate molecules across both the inner and outer membranes. Interacts with MacA.

The protein resides in the cell inner membrane. Part of the tripartite efflux system MacAB-TolC. MacB is a non-canonical ABC transporter that contains transmembrane domains (TMD), which form a pore in the inner membrane, and an ATP-binding domain (NBD), which is responsible for energy generation. Confers resistance against macrolides. The polypeptide is Macrolide export ATP-binding/permease protein MacB (Vibrio parahaemolyticus serotype O3:K6 (strain RIMD 2210633)).